The sequence spans 633 residues: Probable sodium/potassium/calcium exchanger CG1090 (633 aa).

An N-terminal signal peptide occupies residues 1–21; that stretch reads MWNMGLLFLIYYCVSIYSAKG. At 22–111 the chain is on the extracellular side; sequence DTKDGQVLPL…PLMNKWARQH (90 aa). Residues 112–132 traverse the membrane as a helical segment; sequence GGLILHILVAVFTFFGLAIVC. Residues 133–157 are Cytoplasmic-facing; the sequence is DEYFVASLDRLCEELKLSPDVAGAT. Residues 153 to 193 form an Alpha-1 repeat; the sequence is VAGATFMAAGSSAPELATVVIGVFFAKDDIGISGVIGSAVF. A helical transmembrane segment spans residues 158–178; sequence FMAAGSSAPELATVVIGVFFA. Topologically, residues 179–181 are extracellular; the sequence is KDD. Residues 182–202 form a helical membrane-spanning segment; that stretch reads IGISGVIGSAVFNIMFVISVC. The Cytoplasmic segment spans residues 203–220; the sequence is ALCSGTVCQLNWWPLVRD. The next 2 membrane-spanning stretches (helical) occupy residues 221-241 and 242-262; these read CFFY…DVIS and CFES…LHFN. Residues 263-427 are Extracellular-facing; sequence TELERWALGL…EPRRDPLLRP (165 aa). Composition is skewed to polar residues over residues 298-310, 320-333, and 395-405; these read YTQE…QGQK, AKPQ…SDPN, and QVVSTQATSAG. The tract at residues 298–422 is disordered; sequence YTQESVGQTQ…TDKQREPRRD (125 aa). Residues 411–422 are compositionally biased toward basic and acidic residues; that stretch reads KSTDKQREPRRD. The chain crosses the membrane as a helical span at residues 428-448; that stretch reads MEGGLPALVSWYVVYPIHFLC. Topologically, residues 449–468 are cytoplasmic; sequence KKTMPDCRQEQYRNWYPFTF. Residues 469 to 489 traverse the membrane as a helical segment; sequence LMSMVWISFYSYFMVWMITVI. Residues 490–500 are Extracellular-facing; sequence GSTLAIPDTVM. Residues 501–521 traverse the membrane as a helical segment; it reads GLTFVAAGVSVPDALSSIAVI. The Alpha-2 repeat unit spans residues 506–537; sequence AAGVSVPDALSSIAVIKEGFGDMAVSNAIGSN. At 522-535 the chain is on the cytoplasmic side; sequence KEGFGDMAVSNAIG. Residues 536 to 556 form a helical membrane-spanning segment; that stretch reads SNVFDILVCLGLPWFIQTAII. Residues 557–568 are Extracellular-facing; the sequence is KPGSHVNVISKG. Residues 569-589 traverse the membrane as a helical segment; sequence LAYSTLSLFSTVVFLILSTHL. Over 590–597 the chain is Cytoplasmic; that stretch reads NGWKLDKR. Residues 598 to 618 traverse the membrane as a helical segment; it reads LGIILMVWYLFFITLASLYEL. Residues 619-633 lie on the Extracellular side of the membrane; it reads NVFGYMNPPECPSTY.

Belongs to the Ca(2+):cation antiporter (CaCA) (TC 2.A.19) family. SLC24A subfamily.

Its subcellular location is the membrane. In terms of biological role, may function in the removal and maintenance of calcium homeostasis. Transports one Ca(2+) and 1 K(+) in exchange for 4 Na(+). The chain is Probable sodium/potassium/calcium exchanger CG1090 from Drosophila melanogaster (Fruit fly).